The primary structure comprises 466 residues: Glutamate--tRNA ligase 1 (466 aa).

Positions 10–20 (PSPTGLIHLGN) match the 'HIGH' region motif. C103, C105, C130, and H132 together coordinate Zn(2+). Residues 247–251 (PLSKR) carry the 'KMSKS' region motif. K250 provides a ligand contact to ATP.

It belongs to the class-I aminoacyl-tRNA synthetase family. Glutamate--tRNA ligase type 1 subfamily. As to quaternary structure, monomer. Zn(2+) is required as a cofactor.

The protein resides in the cytoplasm. The enzyme catalyses tRNA(Glu) + L-glutamate + ATP = L-glutamyl-tRNA(Glu) + AMP + diphosphate. Its function is as follows. Catalyzes the attachment of glutamate to tRNA(Glu) in a two-step reaction: glutamate is first activated by ATP to form Glu-AMP and then transferred to the acceptor end of tRNA(Glu). This is Glutamate--tRNA ligase 1 from Methylococcus capsulatus (strain ATCC 33009 / NCIMB 11132 / Bath).